The following is a 259-amino-acid chain: MEMLQIAGKTFESRLFVGTGKFASSDLMEAVVLASQSRMVTVALKRVEIGRGEEDDMISRIVRHPEITLLPNTSGVRSAKEAILAAELAREALQTNWLKLEVHPDPRYLLPDPIETLRATEELVRRGFIVLPYVQADPVLCKHLEEAGAATVMPLGAPIGSNRGLKTREMIRIIIEQSRVPVVIDAGIGAPSQAAEAMEMGADAVLVNTAIAVAEDPVSMATAFRLAVEAGRMAFEAKLGSVRSEAEASSPFTSFLNLK.

The Schiff-base intermediate with DXP role is filled by Lys99. Residues Gly160, 186–187 (AG), and 208–209 (NT) contribute to the 1-deoxy-D-xylulose 5-phosphate site.

The protein belongs to the ThiG family. Homotetramer. Forms heterodimers with either ThiH or ThiS.

It is found in the cytoplasm. The enzyme catalyses [ThiS sulfur-carrier protein]-C-terminal-Gly-aminoethanethioate + 2-iminoacetate + 1-deoxy-D-xylulose 5-phosphate = [ThiS sulfur-carrier protein]-C-terminal Gly-Gly + 2-[(2R,5Z)-2-carboxy-4-methylthiazol-5(2H)-ylidene]ethyl phosphate + 2 H2O + H(+). Its pathway is cofactor biosynthesis; thiamine diphosphate biosynthesis. Catalyzes the rearrangement of 1-deoxy-D-xylulose 5-phosphate (DXP) to produce the thiazole phosphate moiety of thiamine. Sulfur is provided by the thiocarboxylate moiety of the carrier protein ThiS. In vitro, sulfur can be provided by H(2)S. The sequence is that of Thiazole synthase from Porphyromonas gingivalis (strain ATCC 33277 / DSM 20709 / CIP 103683 / JCM 12257 / NCTC 11834 / 2561).